We begin with the raw amino-acid sequence, 237 residues long: Insulin-like growth factor-binding protein 6 (237 aa).

The N-terminal stretch at 1 to 25 is a signal peptide; sequence MTPHRLLPPLLLTLLLAARPGGALA. In terms of domain architecture, IGFBP N-terminal spans 26 to 105; the sequence is RCPGCGQGVS…LQGRGRCGRA (80 aa). Cystine bridges form between Cys-27–Cys-30, Cys-38–Cys-42, Cys-55–Cys-61, Cys-69–Cys-82, and Cys-76–Cys-102. Positions 101-158 are disordered; that stretch reads RCGRARTPSGENPKESKPQAGTARSQDVNRRDQQRNSGTSTTPSRSNSGGVQDTEMGP. Over residues 135–151 the composition is skewed to polar residues; sequence RNSGTSTTPSRSNSGGV. One can recognise a Thyroglobulin type-1 domain in the interval 156–231; sequence MGPCRKHLDS…SEGGDGSSLC (76 aa). 3 cysteine pairs are disulfide-bonded: Cys-159–Cys-186, Cys-197–Cys-208, and Cys-210–Cys-231. Residues 215–237 are disordered; the sequence is GQPLPGSSEGGDGSSLCPTGSSG.

In terms of assembly, interacts (via C-terminal domain) with PHB2. In terms of processing, O-glycosylated.

The protein resides in the secreted. IGF-binding proteins prolong the half-life of the IGFs and have been shown to either inhibit or stimulate the growth promoting effects of the IGFs on cell culture. They alter the interaction of IGFs with their cell surface receptors. Activates the MAPK signaling pathway and induces cell migration. The polypeptide is Insulin-like growth factor-binding protein 6 (IGFBP6) (Bos taurus (Bovine)).